A 328-amino-acid chain; its full sequence is Probable ABC transporter permease YtrC (328 aa).

Transmembrane regions (helical) follow at residues 16–36 (VVIL…IVNT), 60–80 (ISNL…CFLG), 110–130 (GFVI…LILV), 144–164 (IGVI…GALT), 167–187 (AFAQ…IIAL), 236–256 (YLLL…FISF), 277–297 (VQIL…YYTG), and 300–320 (IIGY…VSYF).

The protein belongs to the ABC-5 integral membrane protein family. In terms of assembly, the complex is composed of 2 ATP-binding proteins (YtrB and YtrE), 2 transmembrane proteins (YtrC and YtrD) and a solute-binding protein (YtrF).

The protein localises to the cell membrane. In terms of biological role, part of the ABC transporter complex YtrBCDEF that plays a role in acetoin utilization during stationary phase and sporulation. The polypeptide is Probable ABC transporter permease YtrC (ytrC) (Bacillus subtilis (strain 168)).